The primary structure comprises 216 residues: Peptide methionine sulfoxide reductase MsrA (216 aa).

C54 is a catalytic residue.

It belongs to the MsrA Met sulfoxide reductase family.

The catalysed reaction is L-methionyl-[protein] + [thioredoxin]-disulfide + H2O = L-methionyl-(S)-S-oxide-[protein] + [thioredoxin]-dithiol. It carries out the reaction [thioredoxin]-disulfide + L-methionine + H2O = L-methionine (S)-S-oxide + [thioredoxin]-dithiol. Its function is as follows. Has an important function as a repair enzyme for proteins that have been inactivated by oxidation. Catalyzes the reversible oxidation-reduction of methionine sulfoxide in proteins to methionine. This is Peptide methionine sulfoxide reductase MsrA from Xanthomonas campestris pv. campestris (strain 8004).